Here is a 317-residue protein sequence, read N- to C-terminus: Aspartate carbamoyltransferase catalytic subunit (317 aa).

Residues Arg66 and Thr67 each contribute to the carbamoyl phosphate site. Lys94 serves as a coordination point for L-aspartate. 3 residues coordinate carbamoyl phosphate: Arg116, His144, and Gln147. Arg177 and Arg231 together coordinate L-aspartate. Gly272 and Pro273 together coordinate carbamoyl phosphate.

This sequence belongs to the aspartate/ornithine carbamoyltransferase superfamily. ATCase family. As to quaternary structure, heterododecamer (2C3:3R2) of six catalytic PyrB chains organized as two trimers (C3), and six regulatory PyrI chains organized as three dimers (R2).

The enzyme catalyses carbamoyl phosphate + L-aspartate = N-carbamoyl-L-aspartate + phosphate + H(+). The protein operates within pyrimidine metabolism; UMP biosynthesis via de novo pathway; (S)-dihydroorotate from bicarbonate: step 2/3. Catalyzes the condensation of carbamoyl phosphate and aspartate to form carbamoyl aspartate and inorganic phosphate, the committed step in the de novo pyrimidine nucleotide biosynthesis pathway. The sequence is that of Aspartate carbamoyltransferase catalytic subunit from Bradyrhizobium sp. (strain BTAi1 / ATCC BAA-1182).